The following is a 398-amino-acid chain: Cell division protein FtsZ (398 aa).

Residues 21–25 (GGGGN), 108–110 (GTG), Glu139, Arg143, and Asp187 each bind GTP.

Belongs to the FtsZ family. As to quaternary structure, homodimer. Polymerizes to form a dynamic ring structure in a strictly GTP-dependent manner. Interacts directly with several other division proteins.

The protein localises to the cytoplasm. Essential cell division protein that forms a contractile ring structure (Z ring) at the future cell division site. The regulation of the ring assembly controls the timing and the location of cell division. One of the functions of the FtsZ ring is to recruit other cell division proteins to the septum to produce a new cell wall between the dividing cells. Binds GTP and shows GTPase activity. In Pseudomonas putida (strain ATCC 47054 / DSM 6125 / CFBP 8728 / NCIMB 11950 / KT2440), this protein is Cell division protein FtsZ.